The following is a 377-amino-acid chain: Transmembrane 6 superfamily member 2 (377 aa).

9 helical membrane passes run 10–30, 34–54, 63–83, 111–131, 140–160, 170–190, 219–239, 269–289, and 332–352; these read IAAL…VSAL, LWVA…VYSL, PLYA…IIAL, FICY…AGAI, FGLY…TGNI, PAFF…MKVF, LALV…GLVV, MLMY…ALTF, and TWGC…LLAY. EXPERA domains are found at residues 61 to 186 and 217 to 351; these read YDPL…CWAG and ADLA…HLLA.

This sequence belongs to the TM6SF family. Substantial expression in liver and intestine, whereas all other tissues analyzed show low levels.

Its subcellular location is the endoplasmic reticulum membrane. It is found in the endoplasmic reticulum-Golgi intermediate compartment membrane. Its function is as follows. Regulator of liver fat metabolism influencing triglyceride secretion and hepatic lipid droplet content. May function as sterol isomerase. The polypeptide is Transmembrane 6 superfamily member 2 (TM6SF2) (Homo sapiens (Human)).